A 485-amino-acid chain; its full sequence is Glutamate--tRNA ligase (485 aa).

Residues 11-21 (PSPTGHLHIGG) carry the 'HIGH' region motif. The 'KMSKS' region motif lies at 252-256 (KMSKR). Lys255 contacts ATP.

Belongs to the class-I aminoacyl-tRNA synthetase family. Glutamate--tRNA ligase type 1 subfamily. Monomer.

The protein resides in the cytoplasm. It carries out the reaction tRNA(Glu) + L-glutamate + ATP = L-glutamyl-tRNA(Glu) + AMP + diphosphate. Catalyzes the attachment of glutamate to tRNA(Glu) in a two-step reaction: glutamate is first activated by ATP to form Glu-AMP and then transferred to the acceptor end of tRNA(Glu). The polypeptide is Glutamate--tRNA ligase (Halalkalibacterium halodurans (strain ATCC BAA-125 / DSM 18197 / FERM 7344 / JCM 9153 / C-125) (Bacillus halodurans)).